Here is a 380-residue protein sequence, read N- to C-terminus: MAKRDYYEVLGVERGSSEADLKKAYRRLAMKHHPDRNPDDKASEEMFKEANEAYEVLSDASKRAAYDQYGHAGVDPSMGGGGGFGGGAGGANFSDIFGDVFSDFFGGGRGGGGGGRGGAQRGSDLRYTLELNLEEAVRGTTVNIRVPTLVNCKPCDGSGAKKGSSPVTCPTCGGIGQVRMQQGFFSVQQTCPRCHGHGKIISDPCDSCHGEGRVEESKTLSVKVPPGVDTGDRIRLSGEGEAGAQGGPTGDLYVVINVREHAIFQRDGKHLFCEVPISFTDAALGGELEVPTLDGRVKLKIPEGTQTGKQFRLRGKGVAPVRGGGAGDLMCRVAVETPVNLSKRQRELLEEFRTSLENDESHSPKASGWFEGVKRFFGDL.

The J domain occupies 5-70; the sequence is DYYEVLGVER…SKRAAYDQYG (66 aa). Residues 139–217 form a CR-type zinc finger; it reads GTTVNIRVPT…CHGEGRVEES (79 aa). Zn(2+) contacts are provided by C152, C155, C169, C172, C191, C194, C205, and C208. CXXCXGXG motif repeat units follow at residues 152–159, 169–176, 191–198, and 205–212; these read CKPCDGSG, CPTCGGIG, CPRCHGHG, and CDSCHGEG.

This sequence belongs to the DnaJ family. Homodimer. The cofactor is Zn(2+).

The protein resides in the cytoplasm. Its function is as follows. Participates actively in the response to hyperosmotic and heat shock by preventing the aggregation of stress-denatured proteins and by disaggregating proteins, also in an autonomous, DnaK-independent fashion. Unfolded proteins bind initially to DnaJ; upon interaction with the DnaJ-bound protein, DnaK hydrolyzes its bound ATP, resulting in the formation of a stable complex. GrpE releases ADP from DnaK; ATP binding to DnaK triggers the release of the substrate protein, thus completing the reaction cycle. Several rounds of ATP-dependent interactions between DnaJ, DnaK and GrpE are required for fully efficient folding. Also involved, together with DnaK and GrpE, in the DNA replication of plasmids through activation of initiation proteins. The polypeptide is Chaperone protein DnaJ (Pseudomonas syringae pv. tomato (strain ATCC BAA-871 / DC3000)).